The sequence spans 457 residues: D-inositol 3-phosphate glycosyltransferase (457 aa).

Position 34 (His34) interacts with 1D-myo-inositol 3-phosphate. UDP-N-acetyl-alpha-D-glucosamine contacts are provided by residues Gln40–Pro41 and Gly48. Residues Asp45–Asn50, Lys103, Tyr136, Thr160, and Arg180 contribute to the 1D-myo-inositol 3-phosphate site. Residues Arg267, Lys272, and Val333 each coordinate UDP-N-acetyl-alpha-D-glucosamine. Residues Phe342, Arg343, and Ala345 each coordinate Mg(2+). Glu355 and Glu363 together coordinate UDP-N-acetyl-alpha-D-glucosamine. Mg(2+) is bound at residue Thr369.

The protein belongs to the glycosyltransferase group 1 family. MshA subfamily. In terms of assembly, homodimer.

It catalyses the reaction 1D-myo-inositol 3-phosphate + UDP-N-acetyl-alpha-D-glucosamine = 1D-myo-inositol 2-acetamido-2-deoxy-alpha-D-glucopyranoside 3-phosphate + UDP + H(+). Catalyzes the transfer of a N-acetyl-glucosamine moiety to 1D-myo-inositol 3-phosphate to produce 1D-myo-inositol 2-acetamido-2-deoxy-glucopyranoside 3-phosphate in the mycothiol biosynthesis pathway. The chain is D-inositol 3-phosphate glycosyltransferase from Streptomyces coelicolor (strain ATCC BAA-471 / A3(2) / M145).